Consider the following 239-residue polypeptide: Insulin-like growth factor-binding protein 3 receptor (239 aa).

The signal sequence occupies residues 1-38 (MGSCQAGHYLHFCLAHHPPLVCATLILLLLGLSGLGLG). Residues 39–205 (GFLLTHRTDL…EELTLCGSRL (167 aa)) are Extracellular-facing. Residues Asn-101 and Asn-167 are each glycosylated (N-linked (GlcNAc...) asparagine). A helical membrane pass occupies residues 206 to 226 (LVLGFFLILFCGLCCLTAACF). At 227-239 (HPRRESHWSRTRL) the chain is on the cytoplasmic side.

As to quaternary structure, interacts with IGFBP3. Interacts with CASP8.

Its subcellular location is the cell membrane. Its function is as follows. Cell death receptor specific for IGFBP3, may mediate caspase-8-dependent apoptosis upon ligand binding. The protein is Insulin-like growth factor-binding protein 3 receptor (TMEM219) of Bos taurus (Bovine).